Consider the following 153-residue polypeptide: Arachidonate 5-lipoxygenase-activating protein (153 aa).

The Lumenal segment spans residues 1 to 8; the sequence is MDQETVGN. A helical membrane pass occupies residues 9–30; that stretch reads VVLLAIVTLISVVQNGFFAHKV. Residues 31–52 are Cytoplasmic-facing; sequence EHESRTQNGRSFQRTGTLAFER. The chain crosses the membrane as a helical span at residues 53 to 77; that stretch reads VYTANQNCVDAYPTFLAVLWSAGLL. At 78 to 80 the chain is on the lumenal side; sequence CSQ. Residues 81–102 traverse the membrane as a helical segment; the sequence is VPAAFAGLMYLLVRQKYFVGYL. Residues 103-107 lie on the Cytoplasmic side of the membrane; the sequence is GERTQ. Residues 108–115 lie within the membrane without spanning it; that stretch reads STPGYIFG. A helical membrane pass occupies residues 116 to 128; it reads KRIILFLFLMSVA. The Lumenal portion of the chain corresponds to 129 to 153; it reads GIFNYYLIFFFGSDFENYIKTVTTT.

The protein belongs to the MAPEG family. Homotrimer. Interacts with LTC4S and ALOX5.

It is found in the nucleus membrane. It localises to the endoplasmic reticulum membrane. Functionally, required for leukotriene biosynthesis by ALOX5 (5-lipoxygenase). Anchors ALOX5 to the membrane. Binds arachidonic acid, and could play an essential role in the transfer of arachidonic acid to ALOX5. Binds to MK-886, a compound that blocks the biosynthesis of leukotrienes. The chain is Arachidonate 5-lipoxygenase-activating protein (ALOX5AP) from Macaca mulatta (Rhesus macaque).